Consider the following 161-residue polypeptide: Dihydrofolate reductase type 1 from Tn4003 (161 aa).

The region spanning 2-157 (TLSIIVAHDK…IPHTFLHLVR (156 aa)) is the DHFR domain. 6-8 (IVA) is a binding site for substrate. NADP(+) is bound by residues 7–8 (VA) and 15–20 (IGYQNQ). Position 28 (D28) interacts with substrate. 44–47 (ARKT) is an NADP(+) binding site. A substrate-binding site is contributed by R58. NADP(+) contacts are provided by residues 63–66 (LTNQ) and 93–98 (FGGQTL). T112 lines the substrate pocket.

The protein belongs to the dihydrofolate reductase family.

The catalysed reaction is (6S)-5,6,7,8-tetrahydrofolate + NADP(+) = 7,8-dihydrofolate + NADPH + H(+). It participates in cofactor biosynthesis; tetrahydrofolate biosynthesis; 5,6,7,8-tetrahydrofolate from 7,8-dihydrofolate: step 1/1. In terms of biological role, key enzyme in folate metabolism. Catalyzes an essential reaction for de novo glycine and purine synthesis, and for DNA precursor synthesis. This Staphylococcus aureus protein is Dihydrofolate reductase type 1 from Tn4003 (dfrA).